The primary structure comprises 160 residues: SsrA-binding protein (160 aa).

The protein belongs to the SmpB family.

The protein localises to the cytoplasm. In terms of biological role, required for rescue of stalled ribosomes mediated by trans-translation. Binds to transfer-messenger RNA (tmRNA), required for stable association of tmRNA with ribosomes. tmRNA and SmpB together mimic tRNA shape, replacing the anticodon stem-loop with SmpB. tmRNA is encoded by the ssrA gene; the 2 termini fold to resemble tRNA(Ala) and it encodes a 'tag peptide', a short internal open reading frame. During trans-translation Ala-aminoacylated tmRNA acts like a tRNA, entering the A-site of stalled ribosomes, displacing the stalled mRNA. The ribosome then switches to translate the ORF on the tmRNA; the nascent peptide is terminated with the 'tag peptide' encoded by the tmRNA and targeted for degradation. The ribosome is freed to recommence translation, which seems to be the essential function of trans-translation. The sequence is that of SsrA-binding protein from Erwinia tasmaniensis (strain DSM 17950 / CFBP 7177 / CIP 109463 / NCPPB 4357 / Et1/99).